A 120-amino-acid chain; its full sequence is Guanidine hydrolase-activating protein A (120 aa).

Ni(2+) contacts are provided by His-2, Glu-3, and Glu-41. Residues Cys-74, Cys-77, Cys-91, and Cys-94 each coordinate Zn(2+).

This sequence belongs to the HypA/HybF family.

In terms of biological role, involved in the maturation of the nickel-dependent guanidine hydrolase GdmH. Required for nickel insertion into the metal center of GdmH. Seems to be required only for GdmH activation and not for activity. This Synechocystis sp. (strain ATCC 27184 / PCC 6803 / Kazusa) protein is Guanidine hydrolase-activating protein A.